The following is a 557-amino-acid chain: 2-succinyl-5-enolpyruvyl-6-hydroxy-3-cyclohexene-1-carboxylate synthase (557 aa).

The protein belongs to the TPP enzyme family. MenD subfamily. As to quaternary structure, homodimer. Mg(2+) serves as cofactor. Mn(2+) is required as a cofactor. It depends on thiamine diphosphate as a cofactor.

It carries out the reaction isochorismate + 2-oxoglutarate + H(+) = 5-enolpyruvoyl-6-hydroxy-2-succinyl-cyclohex-3-ene-1-carboxylate + CO2. The protein operates within quinol/quinone metabolism; 1,4-dihydroxy-2-naphthoate biosynthesis; 1,4-dihydroxy-2-naphthoate from chorismate: step 2/7. It participates in quinol/quinone metabolism; menaquinone biosynthesis. Its function is as follows. Catalyzes the thiamine diphosphate-dependent decarboxylation of 2-oxoglutarate and the subsequent addition of the resulting succinic semialdehyde-thiamine pyrophosphate anion to isochorismate to yield 2-succinyl-5-enolpyruvyl-6-hydroxy-3-cyclohexene-1-carboxylate (SEPHCHC). In Staphylococcus aureus (strain MRSA252), this protein is 2-succinyl-5-enolpyruvyl-6-hydroxy-3-cyclohexene-1-carboxylate synthase.